A 492-amino-acid polypeptide reads, in one-letter code: Glycerol kinase 1 (492 aa).

T10 lines the ADP pocket. T10 and S11 together coordinate ATP. Residue T10 participates in sn-glycerol 3-phosphate binding. K14 contributes to the ADP binding site. The sn-glycerol 3-phosphate site is built by R80, E81, Y132, and D241. Glycerol is bound by residues R80, E81, Y132, and D241. ADP contacts are provided by T263, G306, G407, and N411. Residues T263, G306, and G407 each coordinate ATP.

This sequence belongs to the FGGY kinase family.

It catalyses the reaction glycerol + ATP = sn-glycerol 3-phosphate + ADP + H(+). It functions in the pathway polyol metabolism; glycerol degradation via glycerol kinase pathway; sn-glycerol 3-phosphate from glycerol: step 1/1. Inhibited by fructose 1,6-bisphosphate (FBP). Its function is as follows. Key enzyme in the regulation of glycerol uptake and metabolism. Catalyzes the phosphorylation of glycerol to yield sn-glycerol 3-phosphate. This Thermotoga maritima (strain ATCC 43589 / DSM 3109 / JCM 10099 / NBRC 100826 / MSB8) protein is Glycerol kinase 1.